A 197-amino-acid chain; its full sequence is Translation initiation factor IF-3 (197 aa).

The protein belongs to the IF-3 family. In terms of assembly, monomer.

It localises to the cytoplasm. Functionally, IF-3 binds to the 30S ribosomal subunit and shifts the equilibrium between 70S ribosomes and their 50S and 30S subunits in favor of the free subunits, thus enhancing the availability of 30S subunits on which protein synthesis initiation begins. The protein is Translation initiation factor IF-3 of Prosthecochloris aestuarii (strain DSM 271 / SK 413).